The chain runs to 216 residues: MRPYVILNAAMTLDGKIATATGSSEISGEEDLRRVHELRRECDAIMVGINTVLADDPRLTVHRVDAAPGDNPVRVVVDSMARTPPHFRVLNDEAPTVIGVSESAPPERVAELRKRAEVVVAGTRRVDLHLLLERLHGMGIERLMLEGGSTLNYSMLTGGLVDEVRVCIAPMIVGGRDARTLVDGEGIDEMADAIRLELKRSYTLGEDLIVEYTVKG.

NADP(+) is bound by residues Thr-51, Asp-55, Ser-79 to Arg-82, Val-126, and Gly-148 to Leu-151.

It belongs to the HTP reductase family. As to quaternary structure, homodimer.

It catalyses the reaction 2,5-diamino-6-(1-D-ribitylamino)pyrimidin-4(3H)-one 5'-phosphate + NADP(+) = 2,5-diamino-6-(1-D-ribosylamino)pyrimidin-4(3H)-one 5'-phosphate + NADPH + H(+). It carries out the reaction 2,5-diamino-6-(1-D-ribitylamino)pyrimidin-4(3H)-one 5'-phosphate + NAD(+) = 2,5-diamino-6-(1-D-ribosylamino)pyrimidin-4(3H)-one 5'-phosphate + NADH + H(+). It functions in the pathway cofactor biosynthesis; riboflavin biosynthesis. Catalyzes an early step in riboflavin biosynthesis, the NADPH-dependent reduction of the ribose side chain of 2,5-diamino-6-ribosylamino-4(3H)-pyrimidinone 5'-phosphate, yielding 2,5-diamino-6-ribitylamino-4(3H)-pyrimidinone 5'-phosphate. In Methanothermobacter thermautotrophicus (strain ATCC 29096 / DSM 1053 / JCM 10044 / NBRC 100330 / Delta H) (Methanobacterium thermoautotrophicum), this protein is 2,5-diamino-6-ribosylamino-4(3H)-pyrimidinone 5'-phosphate reductase.